Here is a 261-residue protein sequence, read N- to C-terminus: Acyl-[acyl-carrier-protein]--UDP-N-acetylglucosamine O-acyltransferase (261 aa).

The protein belongs to the transferase hexapeptide repeat family. LpxA subfamily. In terms of assembly, homotrimer.

Its subcellular location is the cytoplasm. It catalyses the reaction a (3R)-hydroxyacyl-[ACP] + UDP-N-acetyl-alpha-D-glucosamine = a UDP-3-O-[(3R)-3-hydroxyacyl]-N-acetyl-alpha-D-glucosamine + holo-[ACP]. It functions in the pathway glycolipid biosynthesis; lipid IV(A) biosynthesis; lipid IV(A) from (3R)-3-hydroxytetradecanoyl-[acyl-carrier-protein] and UDP-N-acetyl-alpha-D-glucosamine: step 1/6. Its function is as follows. Involved in the biosynthesis of lipid A, a phosphorylated glycolipid that anchors the lipopolysaccharide to the outer membrane of the cell. This Trichlorobacter lovleyi (strain ATCC BAA-1151 / DSM 17278 / SZ) (Geobacter lovleyi) protein is Acyl-[acyl-carrier-protein]--UDP-N-acetylglucosamine O-acyltransferase.